The following is a 134-amino-acid chain: Small ribosomal subunit protein uS11 (134 aa).

Belongs to the universal ribosomal protein uS11 family. Part of the 30S ribosomal subunit. Interacts with proteins S7 and S18. Binds to IF-3.

Located on the platform of the 30S subunit, it bridges several disparate RNA helices of the 16S rRNA. Forms part of the Shine-Dalgarno cleft in the 70S ribosome. This Albidiferax ferrireducens (strain ATCC BAA-621 / DSM 15236 / T118) (Rhodoferax ferrireducens) protein is Small ribosomal subunit protein uS11.